The sequence spans 354 residues: Myosin-binding protein H-like (354 aa).

The interval 1–47 (MEAATAPEVAAGSKLKVKEASPADAEPPQASPGQGAGSPTPQLLPPI) is disordered. Residue S38 is modified to Phosphoserine. Residues 45–139 (PPIEEHPKIW…GGLEATATID (95 aa)) form the Ig-like C2-type 1 domain. One can recognise a Fibronectin type-III domain in the interval 148-238 (PPQSIKLVDV…ETAPITTDLA (91 aa)). The Ig-like C2-type 2 domain maps to 261–345 (PKFTQPLADC…VNPLGEASVD (85 aa)). Cysteines 282 and 333 form a disulfide. At R321 the chain carries Omega-N-methylarginine.

Belongs to the immunoglobulin superfamily. MyBP family. As to expression, expressed in heart, with higher expression in the atria. Expressed in left atrium and ventricle, arteria mammaria interna and skeletal muscle. In terms of tissue distribution, expressed specifically en the left atrium.

It localises to the cytoplasm. Its subcellular location is the myofibril. The protein resides in the sarcomere. Myosin-binding protein which plays a role in cardiac function. Seems to regulate conduction in the atria and ventricular conduction systems. The sequence is that of Myosin-binding protein H-like from Homo sapiens (Human).